Consider the following 123-residue polypeptide: Small ribosomal subunit protein uS12 (123 aa).

Aspartate 89 is modified (3-methylthioaspartic acid).

It belongs to the universal ribosomal protein uS12 family. In terms of assembly, part of the 30S ribosomal subunit. Contacts proteins S8 and S17. May interact with IF1 in the 30S initiation complex.

Its function is as follows. With S4 and S5 plays an important role in translational accuracy. Interacts with and stabilizes bases of the 16S rRNA that are involved in tRNA selection in the A site and with the mRNA backbone. Located at the interface of the 30S and 50S subunits, it traverses the body of the 30S subunit contacting proteins on the other side and probably holding the rRNA structure together. The combined cluster of proteins S8, S12 and S17 appears to hold together the shoulder and platform of the 30S subunit. The polypeptide is Small ribosomal subunit protein uS12 (Desulfovibrio desulfuricans (strain ATCC 27774 / DSM 6949 / MB)).